We begin with the raw amino-acid sequence, 405 residues long: Tyrosine--tRNA ligase (405 aa).

The 'HIGH' region signature appears at 41–50; the sequence is PTAPDLHLGH. Residues 225–229 carry the 'KMSKS' region motif; it reads KMSKS. Lys-228 serves as a coordination point for ATP. Residues 342-404 form the S4 RNA-binding domain; it reads EPLLVWVLSK…GKKGKFLKII (63 aa).

The protein belongs to the class-I aminoacyl-tRNA synthetase family. TyrS type 2 subfamily. Homodimer.

It localises to the cytoplasm. The catalysed reaction is tRNA(Tyr) + L-tyrosine + ATP = L-tyrosyl-tRNA(Tyr) + AMP + diphosphate + H(+). In terms of biological role, catalyzes the attachment of tyrosine to tRNA(Tyr) in a two-step reaction: tyrosine is first activated by ATP to form Tyr-AMP and then transferred to the acceptor end of tRNA(Tyr). In Leptospira interrogans serogroup Icterohaemorrhagiae serovar Lai (strain 56601), this protein is Tyrosine--tRNA ligase.